The following is a 633-amino-acid chain: Phosphomethylpyrimidine synthase (633 aa).

Polar residues predominate over residues 1–13 (MNIRSNPDTTLPA). The interval 1 to 20 (MNIRSNPDTTLPAVTTGPLP) is disordered. Substrate is bound by residues Asn-221, Met-250, Tyr-279, His-315, 335 to 337 (SRG), 376 to 379 (DGLR), and Glu-415. Residue His-419 coordinates Zn(2+). Position 442 (Tyr-442) interacts with substrate. His-483 is a Zn(2+) binding site. Cys-563, Cys-566, and Cys-571 together coordinate [4Fe-4S] cluster.

The protein belongs to the ThiC family. Homodimer. The cofactor is [4Fe-4S] cluster.

It carries out the reaction 5-amino-1-(5-phospho-beta-D-ribosyl)imidazole + S-adenosyl-L-methionine = 4-amino-2-methyl-5-(phosphooxymethyl)pyrimidine + CO + 5'-deoxyadenosine + formate + L-methionine + 3 H(+). The protein operates within cofactor biosynthesis; thiamine diphosphate biosynthesis. Its function is as follows. Catalyzes the synthesis of the hydroxymethylpyrimidine phosphate (HMP-P) moiety of thiamine from aminoimidazole ribotide (AIR) in a radical S-adenosyl-L-methionine (SAM)-dependent reaction. The chain is Phosphomethylpyrimidine synthase from Bradyrhizobium sp. (strain ORS 278).